A 52-amino-acid polypeptide reads, in one-letter code: Ornatin-C (52 aa).

A Cell attachment site motif is present at residues 42 to 44 (RGD).

This sequence belongs to the ornatin family.

It localises to the secreted. Potent inhibitor of fibrinogen interaction with platelet receptors expressed on glycoprotein IIb-IIIa complex. May prevent blood from clotting during either feeding and/or storage of ingested blood. The polypeptide is Ornatin-C (Placobdella ornata (Turtle leech)).